A 717-amino-acid polypeptide reads, in one-letter code: SAGA factor-like TAF6 (717 aa).

The interval 123–204 (KSYAGFDPRS…VPPMLGAMDS (82 aa)) is sufficient for interaction with Taf9.

Belongs to the TAF6 family. Component of the Spt-Ada-Gcn5 acetyltransferase (SAGA) complex consisting of wda/Taf5L, Saf6, Taf9, Taf10b, Taf12, Ada1, Spt3, Spt7, Spt20, Sf3b3, Sf3b5, Nipped-A/Tra1, a histone acetyltransferase (HAT) module made up of Gcn5, Ada2b (Isoform B), Ada3 and Sgf29, and a deubiquitinase (DUB) module made up of not/nonstop, Sgf11 and e(y)2 tethered to SAGA by Atxn7; not essential for SAGA complex assembly, histone-modifying activity or chromosomal recruitment. Interacts (via N-terminal histone-fold domain) with Taf9 (via N-terminal histone-fold domain); the interaction is probably direct. Probably forms a histone-like heterooctamer structure with Taf9, Taf12 and Taf10b.

Its subcellular location is the nucleus. The protein resides in the chromosome. Component of the transcription regulatory complex SAGA, a multiprotein complex that activates transcription by remodeling chromatin and mediating histone acetylation and deubiquitination. The SAGA complex predominantly acetylates histone H3. Involved in SAGA complex coactivator function but not essential for SAGA complex assembly, histone-modifying activity or chromosomal recruitment. Required for oogenesis; involved in transcriptional activation. The chain is SAGA factor-like TAF6 from Drosophila melanogaster (Fruit fly).